Here is a 442-residue protein sequence, read N- to C-terminus: 5-methylthioadenosine/S-adenosylhomocysteine deaminase (442 aa).

Zn(2+) is bound by residues H70 and H72. Residues E99 and H191 each coordinate substrate. Residue H218 participates in Zn(2+) binding. 2 residues coordinate substrate: E221 and D306. Residue D306 coordinates Zn(2+).

Belongs to the metallo-dependent hydrolases superfamily. MTA/SAH deaminase family. The cofactor is Zn(2+).

It catalyses the reaction S-adenosyl-L-homocysteine + H2O + H(+) = S-inosyl-L-homocysteine + NH4(+). The enzyme catalyses S-methyl-5'-thioadenosine + H2O + H(+) = S-methyl-5'-thioinosine + NH4(+). Its function is as follows. Catalyzes the deamination of 5-methylthioadenosine and S-adenosyl-L-homocysteine into 5-methylthioinosine and S-inosyl-L-homocysteine, respectively. Is also able to deaminate adenosine. The sequence is that of 5-methylthioadenosine/S-adenosylhomocysteine deaminase from Nitratidesulfovibrio vulgaris (strain DP4) (Desulfovibrio vulgaris).